We begin with the raw amino-acid sequence, 266 residues long: Putative carbamate hydrolase RutD (266 aa).

Residues 14–119 enclose the AB hydrolase-1 domain; that stretch reads PVVVLSAGLG…LVNGWLSLSP (106 aa).

The protein belongs to the AB hydrolase superfamily. Hydrolase RutD family.

It catalyses the reaction carbamate + 2 H(+) = NH4(+) + CO2. Involved in pyrimidine catabolism. May facilitate the hydrolysis of carbamate, a reaction that can also occur spontaneously. In Klebsiella pneumoniae subsp. pneumoniae (strain ATCC 700721 / MGH 78578), this protein is Putative carbamate hydrolase RutD.